Consider the following 430-residue polypeptide: Adenylosuccinate synthetase (430 aa).

Residues G12 to K18 and G40 to T42 contribute to the GTP site. D13 functions as the Proton acceptor in the catalytic mechanism. Residues D13 and G40 each contribute to the Mg(2+) site. Residues D13–K16, N38–H41, T130, R144, Q224, T239, and R303 each bind IMP. The active-site Proton donor is H41. V299 to R305 contacts substrate. GTP-binding positions include R305, K331–D333, and S413–S415.

Belongs to the adenylosuccinate synthetase family. As to quaternary structure, homodimer. Mg(2+) is required as a cofactor.

Its subcellular location is the cytoplasm. It carries out the reaction IMP + L-aspartate + GTP = N(6)-(1,2-dicarboxyethyl)-AMP + GDP + phosphate + 2 H(+). The protein operates within purine metabolism; AMP biosynthesis via de novo pathway; AMP from IMP: step 1/2. Functionally, plays an important role in the de novo pathway of purine nucleotide biosynthesis. Catalyzes the first committed step in the biosynthesis of AMP from IMP. This is Adenylosuccinate synthetase from Nitrobacter hamburgensis (strain DSM 10229 / NCIMB 13809 / X14).